The primary structure comprises 38 residues: Toxic protein TimP (38 aa).

A transmembrane span lies at residues 1–20; the sequence is MKVRCFCVVLLVSGTLCLHA.

The protein belongs to the TimP toxin family.

The protein localises to the cell inner membrane. In terms of biological role, toxic component of a probable type I toxin-antitoxin (TA) system. Neutralized by sRNA antitoxin TimR which binds to the 5' UTR of timP mRNA and inhibits translation. When TimP is expressed from its promoter in the absence of antitoxin leads to mild cell stress; overexpression in situ is toxic to the cell and causes membrane leakage. The antitoxin gene is encoded immediately upstream and transcribed divergently from the toxin gene; antitoxin RNA is less stable than timP mRNA. The sequence is that of Toxic protein TimP from Salmonella typhimurium (strain SL1344).